The primary structure comprises 424 residues: UDP-N-acetylglucosamine 1-carboxyvinyltransferase (424 aa).

Residue 22–23 (KN) participates in phosphoenolpyruvate binding. Arginine 93 provides a ligand contact to UDP-N-acetyl-alpha-D-glucosamine. The Proton donor role is filled by cysteine 117. Cysteine 117 carries the 2-(S-cysteinyl)pyruvic acid O-phosphothioketal modification. UDP-N-acetyl-alpha-D-glucosamine contacts are provided by residues 122–126 (RPVDL), 162–165 (KVSV), aspartate 307, and isoleucine 329.

It belongs to the EPSP synthase family. MurA subfamily.

The protein localises to the cytoplasm. It catalyses the reaction phosphoenolpyruvate + UDP-N-acetyl-alpha-D-glucosamine = UDP-N-acetyl-3-O-(1-carboxyvinyl)-alpha-D-glucosamine + phosphate. It functions in the pathway cell wall biogenesis; peptidoglycan biosynthesis. In terms of biological role, cell wall formation. Adds enolpyruvyl to UDP-N-acetylglucosamine. This chain is UDP-N-acetylglucosamine 1-carboxyvinyltransferase, found in Haemophilus influenzae (strain 86-028NP).